A 300-amino-acid polypeptide reads, in one-letter code: Glutamyl-Q tRNA(Asp) synthetase (300 aa).

L-glutamate contacts are provided by residues 8 to 12 (RFAPT) and aspartate 44. A 'HIGH' region motif is present at residues 11–21 (PTPSGDLHLGS). Residues cysteine 100, cysteine 102, tyrosine 122, and cysteine 126 each contribute to the Zn(2+) site. Residues tyrosine 181 and arginine 199 each contribute to the L-glutamate site. The 'KMSKS' region signature appears at 237-241 (KLSKQ). Lysine 240 contributes to the ATP binding site.

It belongs to the class-I aminoacyl-tRNA synthetase family. GluQ subfamily. Requires Zn(2+) as cofactor.

In terms of biological role, catalyzes the tRNA-independent activation of glutamate in presence of ATP and the subsequent transfer of glutamate onto a tRNA(Asp). Glutamate is transferred on the 2-amino-5-(4,5-dihydroxy-2-cyclopenten-1-yl) moiety of the queuosine in the wobble position of the QUC anticodon. The polypeptide is Glutamyl-Q tRNA(Asp) synthetase (Synechococcus sp. (strain ATCC 27144 / PCC 6301 / SAUG 1402/1) (Anacystis nidulans)).